A 521-amino-acid chain; its full sequence is MFRQSRWDEPLIFELGNKGRKGFIVPEPEEEVKRKVGGIRIPEKILRKKPPNLPEVSEVEVIRHYTRLTEMSYGVDNGPVPLGSCTMKYNPRIAWEISNDYRINMLHPLQDERTIQGLLEILYELQKWLANITGMDYCSLHPAAGAHGEFSGILIIRKYHELKKQLDRKSEIIIPDSAHGTNPASASMGGFKVVEVPSGEDGNIDMEALKSVVGESTAGLMITNPSTLGLFEENVVEISKIIHGVDGLLYYDGANLNGIMGYTRPGDMGFDIAHINIHKTFGAPHGGGGPGAGPVCVKDKLIDEERNIWLRDLLPGYRVVYDEKTGLYKLVNNEKYSIGLLKAFFGNIVPLIWGYTYILMLGSKGLRTVTEQAVLNTNYFISLVKDIRGYDIPYGKDRYRKHEVVLSAKPLYDDTGVSAEDVAKGLLDAGFYAPTIYFPLIVHEALMTEFTESETIEYIEKYAERLQEISTIAYSDPEKAKEWPLNTSVRRVDNVRANHPKTLAPTWRIYMEKVCRKYSEC.

Lys279 is subject to N6-(pyridoxal phosphate)lysine.

Belongs to the GcvP family. C-terminal subunit subfamily. As to quaternary structure, the glycine cleavage system is composed of four proteins: P, T, L and H. In this organism, the P 'protein' is a heterodimer of two subunits. Requires pyridoxal 5'-phosphate as cofactor.

It carries out the reaction N(6)-[(R)-lipoyl]-L-lysyl-[glycine-cleavage complex H protein] + glycine + H(+) = N(6)-[(R)-S(8)-aminomethyldihydrolipoyl]-L-lysyl-[glycine-cleavage complex H protein] + CO2. The glycine cleavage system catalyzes the degradation of glycine. The P protein binds the alpha-amino group of glycine through its pyridoxal phosphate cofactor; CO(2) is released and the remaining methylamine moiety is then transferred to the lipoamide cofactor of the H protein. The sequence is that of Probable glycine dehydrogenase (decarboxylating) subunit 2 from Staphylothermus marinus (strain ATCC 43588 / DSM 3639 / JCM 9404 / F1).